A 211-amino-acid chain; its full sequence is Large ribosomal subunit protein uL3 (211 aa).

Position 150 is an N5-methylglutamine (Gln150).

This sequence belongs to the universal ribosomal protein uL3 family. In terms of assembly, part of the 50S ribosomal subunit. Forms a cluster with proteins L14 and L19. Post-translationally, methylated by PrmB.

Functionally, one of the primary rRNA binding proteins, it binds directly near the 3'-end of the 23S rRNA, where it nucleates assembly of the 50S subunit. This Pseudomonas entomophila (strain L48) protein is Large ribosomal subunit protein uL3.